A 319-amino-acid polypeptide reads, in one-letter code: tRNA uridine(34) hydroxylase (319 aa).

The 95-residue stretch at 127-221 folds into the Rhodanese domain; it reads KQEDTVIIDA…YGKDPEVQGE (95 aa). C181 serves as the catalytic Cysteine persulfide intermediate.

The protein belongs to the TrhO family.

It catalyses the reaction uridine(34) in tRNA + AH2 + O2 = 5-hydroxyuridine(34) in tRNA + A + H2O. Catalyzes oxygen-dependent 5-hydroxyuridine (ho5U) modification at position 34 in tRNAs. The chain is tRNA uridine(34) hydroxylase from Bacillus cereus (strain B4264).